Here is a 352-residue protein sequence, read N- to C-terminus: DNA integrity scanning protein DisA (352 aa).

One can recognise a DAC domain in the interval 3–143 (DERIVLALKS…FKYSLSEVSV (141 aa)). ATP contacts are provided by residues G70, L88, and 101–105 (IRHRT).

The protein belongs to the DisA family. As to quaternary structure, homooctamer. Requires Mg(2+) as cofactor.

The catalysed reaction is 2 ATP = 3',3'-c-di-AMP + 2 diphosphate. Its function is as follows. Participates in a DNA-damage check-point that is active prior to asymmetric division when DNA is damaged. DisA forms globular foci that rapidly scan along the chromosomes during sporulation, searching for lesions. When a lesion is present, DisA pauses at the lesion site. This triggers a cellular response that culminates in a temporary block in sporulation initiation. Functionally, also has diadenylate cyclase activity, catalyzing the condensation of 2 ATP molecules into cyclic di-AMP (c-di-AMP). c-di-AMP acts as a signaling molecule that couples DNA integrity with progression of sporulation. The rise in c-di-AMP level generated by DisA while scanning the chromosome, operates as a positive signal that advances sporulation; upon encountering a lesion, the DisA focus arrests at the damaged site and halts c-di-AMP synthesis. This Carboxydothermus hydrogenoformans (strain ATCC BAA-161 / DSM 6008 / Z-2901) protein is DNA integrity scanning protein DisA.